A 255-amino-acid chain; its full sequence is Uridylate kinase (255 aa).

Residue 22–25 (KLSG) coordinates ATP. The segment at 30 to 35 (GNGGYG) is involved in allosteric activation by GTP. G64 contacts UMP. G65 and R69 together coordinate ATP. UMP-binding positions include D85 and 146–153 (TGNPFFTT). 3 residues coordinate ATP: N174, Y180, and D183.

The protein belongs to the UMP kinase family. Homohexamer.

It localises to the cytoplasm. The catalysed reaction is UMP + ATP = UDP + ADP. Its pathway is pyrimidine metabolism; CTP biosynthesis via de novo pathway; UDP from UMP (UMPK route): step 1/1. Allosterically activated by GTP. Inhibited by UTP. Functionally, catalyzes the reversible phosphorylation of UMP to UDP. This is Uridylate kinase from Rubrobacter xylanophilus (strain DSM 9941 / JCM 11954 / NBRC 16129 / PRD-1).